Here is a 204-residue protein sequence, read N- to C-terminus: GTP cyclohydrolase-2 (204 aa).

49–53 (RIHSE) provides a ligand contact to GTP. Positions 54, 65, and 67 each coordinate Zn(2+). Residues Gln-70, 92–94 (EGR), and Thr-114 contribute to the GTP site. Asp-126 acts as the Proton acceptor in catalysis. Arg-128 functions as the Nucleophile in the catalytic mechanism. GTP contacts are provided by Thr-149 and Lys-154.

It belongs to the GTP cyclohydrolase II family. The cofactor is Zn(2+).

The catalysed reaction is GTP + 4 H2O = 2,5-diamino-6-hydroxy-4-(5-phosphoribosylamino)-pyrimidine + formate + 2 phosphate + 3 H(+). It participates in cofactor biosynthesis; riboflavin biosynthesis; 5-amino-6-(D-ribitylamino)uracil from GTP: step 1/4. Catalyzes the conversion of GTP to 2,5-diamino-6-ribosylamino-4(3H)-pyrimidinone 5'-phosphate (DARP), formate and pyrophosphate. This is GTP cyclohydrolase-2 from Shewanella baltica (strain OS223).